Consider the following 296-residue polypeptide: Light-inducible protein CPRF3 (296 aa).

3 disordered regions span residues 1-27 (MSDGEEGTPMKHPKPASSVEEAPITTT), 98-165 (PNLA…GSLE), and 190-223 (RVNDERELKRQRRKQSNRESARRSRLRKQAKSDE). Residues 107-117 (VGRKISDEKGR) are compositionally biased toward basic and acidic residues. Over residues 145-156 (SSSDNDCPSLSS) the composition is skewed to low complexity. The region spanning 196–259 (ELKRQRRKQS…AEVTSENHSI (64 aa)) is the bZIP domain. The segment at 198 to 220 (KRQRRKQSNRESARRSRLRKQAK) is basic motif. The segment at 224–245 (LQERLDNLSKENRILRKNLQRI) is leucine-zipper.

It belongs to the bZIP family. As to quaternary structure, binds DNA as a dimer.

It localises to the nucleus. In terms of biological role, binds to the G-box-like motif (5'-ACGTGGC-3') of the chalcone synthase (CHS) gene promoter. G-box and G-box-like motifs are defined in promoters of certain plant genes which are regulated by such diverse stimuli as light-induction or hormone control. This is Light-inducible protein CPRF3 (CPRF3) from Petroselinum crispum (Parsley).